The following is a 627-amino-acid chain: 1-deoxy-D-xylulose-5-phosphate synthase (627 aa).

Residues H76 and 117 to 119 (SHA) each bind thiamine diphosphate. A Mg(2+)-binding site is contributed by D148. Thiamine diphosphate-binding positions include 149–150 (GA), N178, F288, and E370. Position 178 (N178) interacts with Mg(2+).

It belongs to the transketolase family. DXPS subfamily. As to quaternary structure, homodimer. Requires Mg(2+) as cofactor. It depends on thiamine diphosphate as a cofactor.

It carries out the reaction D-glyceraldehyde 3-phosphate + pyruvate + H(+) = 1-deoxy-D-xylulose 5-phosphate + CO2. It participates in metabolic intermediate biosynthesis; 1-deoxy-D-xylulose 5-phosphate biosynthesis; 1-deoxy-D-xylulose 5-phosphate from D-glyceraldehyde 3-phosphate and pyruvate: step 1/1. Catalyzes the acyloin condensation reaction between C atoms 2 and 3 of pyruvate and glyceraldehyde 3-phosphate to yield 1-deoxy-D-xylulose-5-phosphate (DXP). This Cutibacterium acnes (strain DSM 16379 / KPA171202) (Propionibacterium acnes) protein is 1-deoxy-D-xylulose-5-phosphate synthase.